Reading from the N-terminus, the 363-residue chain is L-serine dehydratase/L-threonine deaminase (363 aa).

An N-acetylalanine modification is found at alanine 2. An N6-(pyridoxal phosphate)lysine modification is found at lysine 41. Residues arginine 74–proline 98 are disordered. Residue proline 164 participates in pyridoxal 5'-phosphate binding.

Belongs to the serine/threonine dehydratase family. Homodimer. Pyridoxal 5'-phosphate serves as cofactor. Predominantly expressed in the periportal regions of the liver.

The protein localises to the cytoplasm. It carries out the reaction L-serine = pyruvate + NH4(+). The enzyme catalyses L-threonine = 2-oxobutanoate + NH4(+). It participates in carbohydrate biosynthesis; gluconeogenesis. Catalyzes the pyridoxal-phosphate-dependent dehydrative deamination of L-threonine and L-serine to ammonia and alpha-ketobutyrate and pyruvate, respectively. This is L-serine dehydratase/L-threonine deaminase (Sds) from Rattus norvegicus (Rat).